We begin with the raw amino-acid sequence, 646 residues long: MIRMALKPLVAACLLASLSTAPQAAPSPYSTLVVFGDSLSDAGQFPDPAGPAGSTSRFTNRVGPTYQNGSGEIFGPTAPMLLGNQLGIAPGDLAASTSPVNAQQGIADGNNWAVGGYRTDQIYDSITAANGSLIERDNTLLRSRDGYLVDRARQGLGADPNALYYITGGGNDFLQGRILNDVQAQQAAGRLVDSVQALQQAGARYIVVWLLPDLGLTPATFGGPLQPFASQLSGTFNAELTAQLSQAGANVIPLNIPLLLKEGMANPASFGLAADQNLIGTCFSGNGCTMNPTYGINGSTPDPSKLLFNDSVHPTITGQRLIADYTYSLLSAPWELTLLPEMAHGTLRAYQDELRSQWQADWENWQNVGQWRGFVGGGGQRLDFDSQDSAASGDGNGYNLTLGGSYRIDEAWRAGVAAGFYRQKLEAGAKDSDYRMNSYMASAFVQYQENRWWADAALTGGYLDYDDLKRKFALGGGERSEKGDTNGHLWAFSARLGYDIAQQADSPWHLSPFVSADYARVEVDGYSEKGASATALDYDDQKRSSKRLGAGLQGKYAFGSDTQLFAEYAHEREYEDDTQDLTMSLNSLPGNRFTLEGYTPQDHLNRVSLGFSQKLAPELSLRGGYNWRKGEDDTQQSVSLALSLDF.

A signal peptide spans 1–24 (MIRMALKPLVAACLLASLSTAPQA). The Extracellular portion of the chain corresponds to 25–397 (APSPYSTLVV…DSAASGDGNG (373 aa)). S38 serves as the catalytic Nucleophile. Catalysis depends on residues D310 and H313. The Autotransporter domain maps to 366–646 (QNVGQWRGFV…SVSLALSLDF (281 aa)). A beta stranded membrane pass occupies residues 398-408 (YNLTLGGSYRI). Residues 409–410 (DE) are Periplasmic-facing. Residues 411–421 (AWRAGVAAGFY) traverse the membrane as a beta stranded segment. Residues 422–437 (RQKLEAGAKDSDYRMN) lie on the Extracellular side of the membrane. Residues 438 to 447 (SYMASAFVQY) form a beta stranded membrane-spanning segment. The Periplasmic portion of the chain corresponds to 448 to 451 (QENR). Residues 452-461 (WWADAALTGG) form a beta stranded membrane-spanning segment. Over 462–488 (YLDYDDLKRKFALGGGERSEKGDTNGH) the chain is Extracellular. A beta stranded transmembrane segment spans residues 489–500 (LWAFSARLGYDI). Residues 501–507 (AQQADSP) lie on the Periplasmic side of the membrane. A beta stranded membrane pass occupies residues 508–518 (WHLSPFVSADY). The Extracellular portion of the chain corresponds to 519-547 (ARVEVDGYSEKGASATALDYDDQKRSSKR). A beta stranded transmembrane segment spans residues 548-558 (LGAGLQGKYAF). Residues 559-561 (GSD) are Periplasmic-facing. A beta stranded transmembrane segment spans residues 562–571 (TQLFAEYAHE). Over 572–605 (REYEDDTQDLTMSLNSLPGNRFTLEGYTPQDHLN) the chain is Extracellular. Residues 606 to 615 (RVSLGFSQKL) form a beta stranded membrane-spanning segment. The Periplasmic segment spans residues 616-618 (APE). Residues 619–628 (LSLRGGYNWR) traverse the membrane as a beta stranded segment. Residues 629 to 636 (KGEDDTQQ) lie on the Extracellular side of the membrane. The beta stranded transmembrane segment at 637–646 (SVSLALSLDF) threads the bilayer.

The protein belongs to the 'GDSL' lipolytic enzyme family.

The protein localises to the cell outer membrane. The catalysed reaction is a carboxylic ester + H2O = an alcohol + a carboxylate + H(+). In terms of biological role, esterase whose enzymatic activity is required for rhamnolipid production, all kinds of cell motility (swimming, swarming, and twitching), and biofilm formation; the exact role of EstA in these processes is unclear. In vitro, has pronounced esterase activities towards p-nitrophenyl esters of short acyl chain length (C4-C6) and Tween detergents. Also shows relatively high activity towards beta-naphthyl butyrate, whereas its activities towards triacylglycerols and acyls-CoA are negligible. This chain is Esterase EstA (estA), found in Pseudomonas aeruginosa (strain ATCC 15692 / DSM 22644 / CIP 104116 / JCM 14847 / LMG 12228 / 1C / PRS 101 / PAO1).